The following is a 223-amino-acid chain: ATP synthase subunit a 1 (223 aa).

5 consecutive transmembrane segments (helical) span residues 20-40, 78-98, 108-128, 174-194, and 196-216; these read LTIATTWALMLVLVGGSAFAS, YLPYLGTLFIFIAFSNLCTII, LSTTAALAMSVFVAVPLFGIA, MILAILLTVTPFVFPVLMSVL, and LLTGMVQAYIFSILATVYISA.

The protein belongs to the ATPase A chain family. F-type ATPases have 2 components, CF(1) - the catalytic core - and CF(0) - the membrane proton channel. CF(1) has five subunits: alpha(3), beta(3), gamma(1), delta(1), epsilon(1). CF(0) has four main subunits: a, b, b' and c.

The protein localises to the cell inner membrane. Its function is as follows. Key component of the proton channel; it plays a direct role in the translocation of protons across the membrane. The chain is ATP synthase subunit a 1 from Chlorobium luteolum (strain DSM 273 / BCRC 81028 / 2530) (Pelodictyon luteolum).